Here is a 476-residue protein sequence, read N- to C-terminus: Bifunctional protein HldE (476 aa).

A ribokinase region spans residues 1 to 318 (MKPILPDYNN…AEAIHGSRDT (318 aa)). Position 195–198 (195–198 (NMSE)) interacts with ATP. Asp-264 is a catalytic residue. Residues 344–476 (MTNGCFDILH…IIDAIKGGRG (133 aa)) are cytidylyltransferase.

This sequence in the N-terminal section; belongs to the carbohydrate kinase PfkB family. In the C-terminal section; belongs to the cytidylyltransferase family. Homodimer.

It catalyses the reaction D-glycero-beta-D-manno-heptose 7-phosphate + ATP = D-glycero-beta-D-manno-heptose 1,7-bisphosphate + ADP + H(+). It carries out the reaction D-glycero-beta-D-manno-heptose 1-phosphate + ATP + H(+) = ADP-D-glycero-beta-D-manno-heptose + diphosphate. The protein operates within nucleotide-sugar biosynthesis; ADP-L-glycero-beta-D-manno-heptose biosynthesis; ADP-L-glycero-beta-D-manno-heptose from D-glycero-beta-D-manno-heptose 7-phosphate: step 1/4. It functions in the pathway nucleotide-sugar biosynthesis; ADP-L-glycero-beta-D-manno-heptose biosynthesis; ADP-L-glycero-beta-D-manno-heptose from D-glycero-beta-D-manno-heptose 7-phosphate: step 3/4. Its pathway is bacterial outer membrane biogenesis; LPS core biosynthesis. Functionally, catalyzes the phosphorylation of D-glycero-D-manno-heptose 7-phosphate at the C-1 position to selectively form D-glycero-beta-D-manno-heptose-1,7-bisphosphate. In terms of biological role, catalyzes the ADP transfer from ATP to D-glycero-beta-D-manno-heptose 1-phosphate, yielding ADP-D-glycero-beta-D-manno-heptose. In Vibrio vulnificus (strain CMCP6), this protein is Bifunctional protein HldE.